We begin with the raw amino-acid sequence, 309 residues long: Homoserine O-succinyltransferase (309 aa).

Residue Cys-142 is the Acyl-thioester intermediate of the active site. Positions 163 and 192 each coordinate substrate. Catalysis depends on His-235, which acts as the Proton acceptor. The active site involves Glu-237. Substrate is bound at residue Arg-249.

It belongs to the MetA family.

It is found in the cytoplasm. The enzyme catalyses L-homoserine + succinyl-CoA = O-succinyl-L-homoserine + CoA. The protein operates within amino-acid biosynthesis; L-methionine biosynthesis via de novo pathway; O-succinyl-L-homoserine from L-homoserine: step 1/1. Its function is as follows. Transfers a succinyl group from succinyl-CoA to L-homoserine, forming succinyl-L-homoserine. In Klebsiella pneumoniae subsp. pneumoniae (strain ATCC 700721 / MGH 78578), this protein is Homoserine O-succinyltransferase.